A 507-amino-acid chain; its full sequence is Cytochrome c-type protein ImcH (507 aa).

The next 3 membrane-spanning stretches (helical) occupy residues 14-34 (ISLIGFLLAVVATGLIIAFIA), 45-65 (YIGLLVYFAFPGMLILGLILV), and 100-120 (LFIFFVLASVIFVLIVSVASI). Cys132, Cys136, Met140, His152, Cys157, Cys160, His161, Asp400, Cys449, Cys452, His453, Cys487, Cys490, His491, and Glu496 together coordinate heme.

It belongs to the NapC/NirT/NrfH family. Binds 4 heme c groups covalently per subunit.

Its subcellular location is the cell inner membrane. In terms of biological role, redox protein involved in a high-potential metal respiratory pathway. Is required only for electron transfer to terminal extracellular electron acceptors with redox potentials higher than -0.1 V. ImcH likely transfers electrons from the quinone pool to a periplasmic acceptor. The polypeptide is Cytochrome c-type protein ImcH (Geobacter sulfurreducens (strain ATCC 51573 / DSM 12127 / PCA)).